A 320-amino-acid polypeptide reads, in one-letter code: Sucrose operon repressor (320 aa).

An HTH lacI-type domain is found at 1-57 (MVAKLTDVAKLAGVSPTTVSRVINRKGYLSEKTITKVQAAMKTLGYKPNNLARSLQG). Residues 5–24 (LTDVAKLAGVSPTTVSRVIN) constitute a DNA-binding region (H-T-H motif).

Functionally, negative regulator of scrB expression. The sequence is that of Sucrose operon repressor (scrR) from Streptococcus mutans serotype c (strain ATCC 700610 / UA159).